The chain runs to 260 residues: BTB/POZ domain-containing protein KCTD21 (260 aa).

Residues 3–72 (DPITLNVGGK…LRTSHLDLPE (70 aa)) enclose the BTB domain. Residues 88 to 112 (QVQPLIEALQEKEVELSKAEKNAML) are a coiled coil.

As to quaternary structure, homopentamer. Interacts with KCTD11; KCTD21 and KCTD11 may associate in pentameric assemblies. Interacts (via BTB domain) with CUL3; indicative for a participation in a BCR (BTB-CUL3-RBX1) E3 ubiquitin-protein ligase complex. Highly expressed in cerebellum and brain. Expressed in adult cerebellum (at protein level).

Its pathway is protein modification; protein ubiquitination. Probable substrate-specific adapter of a BCR (BTB-CUL3-RBX1) E3 ubiquitin-protein ligase complex mediating the ubiquitination and subsequent proteasomal degradation of target proteins. Promotes the ubiquitination of HDAC1. Can function as antagonist of the Hedgehog pathway by affecting the nuclear transfer of transcription factor GLI1; the function probably occurs via HDAC1 down-regulation, keeping GLI1 acetylated and inactive. Inhibits cell growth and tumorigenicity of medulloblastoma (MDB). The polypeptide is BTB/POZ domain-containing protein KCTD21 (Kctd21) (Mus musculus (Mouse)).